Reading from the N-terminus, the 116-residue chain is Ribosome-binding factor A (116 aa).

It belongs to the RbfA family. As to quaternary structure, monomer. Binds 30S ribosomal subunits, but not 50S ribosomal subunits or 70S ribosomes.

The protein localises to the cytoplasm. In terms of biological role, one of several proteins that assist in the late maturation steps of the functional core of the 30S ribosomal subunit. Associates with free 30S ribosomal subunits (but not with 30S subunits that are part of 70S ribosomes or polysomes). Required for efficient processing of 16S rRNA. May interact with the 5'-terminal helix region of 16S rRNA. The sequence is that of Ribosome-binding factor A from Levilactobacillus brevis (strain ATCC 367 / BCRC 12310 / CIP 105137 / JCM 1170 / LMG 11437 / NCIMB 947 / NCTC 947) (Lactobacillus brevis).